The chain runs to 142 residues: Phenylalanine ammonia-lyase (142 aa).

Residues Lys66, Glu94, and Asn97 each coordinate (E)-cinnamate.

Belongs to the PAL/histidase family. Homotetramer. In terms of processing, contains an active site 4-methylidene-imidazol-5-one (MIO), which is formed autocatalytically by cyclization and dehydration of residues Ala-Ser-Gly.

It is found in the cytoplasm. The enzyme catalyses L-phenylalanine = (E)-cinnamate + NH4(+). It participates in phenylpropanoid metabolism; trans-cinnamate biosynthesis; trans-cinnamate from L-phenylalanine: step 1/1. Functionally, catalyzes the non-oxidative deamination of L-phenylalanine to form trans-cinnamic acid and a free ammonium ion. Facilitates the commitment step in phenylpropanoid pathways that produce secondary metabolites such as lignins, coumarins and flavonoids. This is Phenylalanine ammonia-lyase (palA) from Agaricus bisporus (White button mushroom).